The primary structure comprises 336 residues: Opsin-1, short-wave-sensitive 1 (336 aa).

At 1–29 (MDAWAVQFGNASKVSPFEGEQYHIAPKWA) the chain is on the extracellular side. An N-linked (GlcNAc...) asparagine glycan is attached at Asn-10. Residues 30 to 54 (FYLQAAFMGFVFIVGTPMNGIVLFV) form a helical membrane-spanning segment. Over 55-66 (TMKYKKLRQPLN) the chain is Cytoplasmic. The chain crosses the membrane as a helical span at residues 67–91 (YILVNISLAGFIFDTFSVSQVFVCA). Over 92 to 106 (ARGYYFLGYTLCAME) the chain is Extracellular. A disulfide bridge links Cys-103 with Cys-180. Residues 107 to 126 (AAMGSIAGLVTGWSLAVLAF) traverse the membrane as a helical segment. Over 127–145 (ERYVVICKPFGSFKFGQGQ) the chain is Cytoplasmic. A helical transmembrane segment spans residues 146–169 (AVGAVVFTWIIGTACATPPFFGWS). The Extracellular portion of the chain corresponds to 170–195 (RYIPEGLGTACGPDWYTKSEEYNSES). The helical transmembrane segment at 196-223 (YTYFLLITCFMMPMTIIIFSYSQLLGAL) threads the bilayer. The Cytoplasmic segment spans residues 224-245 (RAVAAQQAESESTQKAEREVSR). A helical membrane pass occupies residues 246 to 269 (MVVVMVGSFVLCYAPYAVTAMYFA). Residues 270–277 (NSDEPNKD) lie on the Extracellular side of the membrane. Residues 278-302 (YRLVAIPAFFSKSSCVYNPLIYAFM) traverse the membrane as a helical segment. Lys-289 is subject to N6-(retinylidene)lysine. At 303–336 (NKQFNACIMETVFGKKIDESSEVSSKTETSSVSA) the chain is on the cytoplasmic side.

It belongs to the G-protein coupled receptor 1 family. Opsin subfamily. Phosphorylated on some or all of the serine and threonine residues present in the C-terminal region. Retinal short single cones, outer and inner segments.

The protein resides in the membrane. In terms of biological role, visual pigments are the light-absorbing molecules that mediate vision. They consist of an apoprotein, opsin, covalently linked to cis-retinal. The sequence is that of Opsin-1, short-wave-sensitive 1 (opn1sw1) from Danio rerio (Zebrafish).